Reading from the N-terminus, the 148-residue chain is MSEQPFWQQKTLDEMTDAEWESLCDGCGQCCLHKLMDEDTDEIYFTNVACRQLNIKTCQCRNYERRFEYEPDCIKLTRENLPTFEWLPPTCAYRLLAEGKSLPAWHPLLTGSKAAMHGERISVRHIAVPESTVVDWQDHILNLPDRAR.

The protein belongs to the UPF0260 family.

This is UPF0260 protein KPK_1978 from Klebsiella pneumoniae (strain 342).